The chain runs to 600 residues: Elongation factor 4 (600 aa).

In terms of domain architecture, tr-type G spans 5 to 187 (KYIRNFSIIA…AIVNKLPPPK (183 aa)). Residues 17–22 (DHGKST) and 134–137 (NKLD) contribute to the GTP site.

This sequence belongs to the TRAFAC class translation factor GTPase superfamily. Classic translation factor GTPase family. LepA subfamily.

The protein localises to the cell inner membrane. It catalyses the reaction GTP + H2O = GDP + phosphate + H(+). Functionally, required for accurate and efficient protein synthesis under certain stress conditions. May act as a fidelity factor of the translation reaction, by catalyzing a one-codon backward translocation of tRNAs on improperly translocated ribosomes. Back-translocation proceeds from a post-translocation (POST) complex to a pre-translocation (PRE) complex, thus giving elongation factor G a second chance to translocate the tRNAs correctly. Binds to ribosomes in a GTP-dependent manner. The sequence is that of Elongation factor 4 from Rickettsia africae (strain ESF-5).